The primary structure comprises 66 residues: Antitoxin RelB2 (66 aa).

Functionally, antitoxin component of a type II toxin-antitoxin (TA) system. Neutralizes the effect of cognate toxin RelE2, but no other RelE or ParE toxin. This Caulobacter vibrioides (strain ATCC 19089 / CIP 103742 / CB 15) (Caulobacter crescentus) protein is Antitoxin RelB2 (relB2).